We begin with the raw amino-acid sequence, 478 residues long: BTB/POZ domain-containing protein 17 (478 aa).

The N-terminal stretch at M1–A28 is a signal peptide. N61, N100, and N195 each carry an N-linked (GlcNAc...) asparagine glycan. In terms of domain architecture, BTB spans S63–L132. The region spanning A169–Q269 is the BACK domain.

Its subcellular location is the secreted. This is BTB/POZ domain-containing protein 17 (BTBD17) from Homo sapiens (Human).